The sequence spans 165 residues: Large ribosomal subunit protein uL10 (165 aa).

It belongs to the universal ribosomal protein uL10 family. Part of the ribosomal stalk of the 50S ribosomal subunit. The N-terminus interacts with L11 and the large rRNA to form the base of the stalk. The C-terminus forms an elongated spine to which L12 dimers bind in a sequential fashion forming a multimeric L10(L12)X complex.

In terms of biological role, forms part of the ribosomal stalk, playing a central role in the interaction of the ribosome with GTP-bound translation factors. This chain is Large ribosomal subunit protein uL10, found in Pectobacterium atrosepticum (strain SCRI 1043 / ATCC BAA-672) (Erwinia carotovora subsp. atroseptica).